Consider the following 256-residue polypeptide: Small ribosomal subunit protein eS1 (256 aa).

Positions 1 to 18 (MAVGKNKRLSKGKKGLKK) are enriched in basic residues. The disordered stretch occupies residues 1–20 (MAVGKNKRLSKGKKGLKKRT). Residue Ala2 is modified to N-acetylalanine; partial.

It belongs to the eukaryotic ribosomal protein eS1 family. In terms of assembly, component of the small ribosomal subunit. Mature ribosomes consist of a small (40S) and a large (60S) subunit. The 40S subunit contains about 33 different proteins and 1 molecule of RNA (18S). The 60S subunit contains about 49 different proteins and 3 molecules of RNA (25S, 5.8S and 5S).

It is found in the cytoplasm. The chain is Small ribosomal subunit protein eS1 (rps1) from Talaromyces stipitatus (strain ATCC 10500 / CBS 375.48 / QM 6759 / NRRL 1006) (Penicillium stipitatum).